The sequence spans 125 residues: Large ribosomal subunit protein uL24 (125 aa).

It belongs to the universal ribosomal protein uL24 family. Part of the 50S ribosomal subunit.

In terms of biological role, one of two assembly initiator proteins, it binds directly to the 5'-end of the 23S rRNA, where it nucleates assembly of the 50S subunit. One of the proteins that surrounds the polypeptide exit tunnel on the outside of the subunit. The chain is Large ribosomal subunit protein uL24 from Mycoplasma mobile (strain ATCC 43663 / 163K / NCTC 11711) (Mesomycoplasma mobile).